Consider the following 1330-residue polypeptide: Protein PUTATIVE RECOMBINATION INITIATION DEFECT 1 (1330 aa).

Positions 1310 to 1330 (REGRVSPIQEETRQMQTERIV) are disordered.

As to quaternary structure, interacts with SPO11-1. According to PubMed:28855712, may interact with SPO11-2; this is in contradiction with PubMed:9461215 which claims that it seems to not interact with SPO11-2. Binds to DFO, PRD3 and MTOPVIB. Facilitates an interaction between PRD3 and DFO. Expressed in flower buds.

It localises to the nucleus. In terms of biological role, involved in DNA cleavage that forms the double-strand breaks (DSB) that initiate meiotic recombination. This is Protein PUTATIVE RECOMBINATION INITIATION DEFECT 1 from Arabidopsis thaliana (Mouse-ear cress).